Here is a 493-residue protein sequence, read N- to C-terminus: Neuronal acetylcholine receptor subunit alpha-6 (493 aa).

The N-terminal stretch at 1–30 is a signal peptide; the sequence is MLNGWGRGDLRSGLCLWICGFLAFFKGSRG. Residues 31 to 240 lie on the Extracellular side of the membrane; it reads CVSEEQLFHT…TYSFYIRRLP (210 aa). Residues N54 and N171 are each glycosylated (N-linked (GlcNAc...) asparagine). 2 cysteine pairs are disulfide-bonded: C158/C172 and C222/C223. Transmembrane regions (helical) follow at residues 241 to 265, 272 to 290, and 306 to 327; these read MFYTINLIIPCLFISFLTVLVFYLP, VTLCISVLLSLTVFLLVIT, and YLLFTMIFVTLSIVVTVFVLNI. At 328–464 the chain is on the cytoplasmic side; that stretch reads HYRTPATHTM…WKYMAMVVDR (137 aa). S401 carries the post-translational modification Phosphoserine. A helical transmembrane segment spans residues 465–484; it reads VFLWVFIIVCVFGTVGLFLQ.

It belongs to the ligand-gated ion channel (TC 1.A.9) family. Acetylcholine receptor (TC 1.A.9.1) subfamily. Alpha-6/CHRNA6 sub-subfamily. As to quaternary structure, neuronal AChR is composed of two different types of subunits: alpha and non-alpha (beta). CHRNA6/alpha-6 subunit can be combined to CHRNB2/beta-2 and CHRNA4/alpha-4 to give rise to functional receptors. Interacts with LYPD6. In terms of tissue distribution, predominantly expressed in only a few brain areas, including dopaminergic neurons, norepirephrine neurons and cells of the visual system.

It localises to the synaptic cell membrane. It catalyses the reaction Ca(2+)(in) = Ca(2+)(out). The enzyme catalyses K(+)(in) = K(+)(out). It carries out the reaction Na(+)(in) = Na(+)(out). Activated by a myriad of ligands such as acetylcholine, cytisine and nicotine. CHRNA6 nAChR activity is inhibited by the antagonists alpha-conotoxin MII and PIA, a small disulfide-constrained peptides from cone snails. Functionally, component of neuronal acetylcholine receptors (nAChRs) that function as pentameric, ligand-gated cation channels with high calcium permeability among other activities. nAChRs are excitatory neurotrasnmitter receptors formed by a collection of nAChR subunits known to mediate synaptic transmission in the nervous system and the neuromuscular junction. Each nAchR subunit confers differential attributes to channel properties, including activation, deactivation and desensitization kinetics, pH sensitivity, cation permeability, and binding to allosteric modulators. CHRNA6 forms pentameric channels with CHRNB2 and CHRNA4 that exhibit high sensitivity to ACh and nicotine and are predominantly expressed in only a few brain areas, including dopaminergic neurons, norepirephrine neurons and cells of the visual system. nAChrs containing CHRNA6 subunits mediate endogenous cholinergic modulation of dopamine and gamma-aminobutyric acid (GABA) release in response to nicotine at nerve terminals. This chain is Neuronal acetylcholine receptor subunit alpha-6 (Chrna6), found in Rattus norvegicus (Rat).